The sequence spans 496 residues: MEKWRFNSMLSKEELEHQCGLSKSLKCTGSIGNTNGGEDLAINNMIRGWVDSDNSSNIDHLVGVSNIRSLISDDTFLVRDSNGKNYSIYFDIENQIFEIEIEGDRSFLSELESFFSSYLNLNYSYPNDGSKSDNHYYDRSMYDTQYSWNNYITSCIENYLRSEIHIDSYISSSSDNYSKSYISNYVCSGGGLNSTDSESFSIQTSANGSTFDMIGKFKNFDISPKYSHLWVQCENCYGLNYKKFFRLKLHICEQCGYHLKMSSSERIEILIDPGTWDAMDEDMVSVDPIEFHSEEEPYKDRIDSYQKKTGLTEAVQTGIGQLNGISIAIGVMDFQFMGGSMGSVVGEKITRLIEYATNGFLPLIIVCASGGARMQEGSLSLMQMAKISSASYDYQSNKKLFYVSILTSPTTGGVTASFGMLGDIIIAEPNAYIAFAGKRVIEQTLNKTVPDGSQEAEYLFQKGLFDLIVPRNLLKGVLSELFQLHGFFPLNKNFIK.

Residues 229–496 (LWVQCENCYG…FFPLNKNFIK (268 aa)) enclose the CoA carboxyltransferase N-terminal domain. Zn(2+) is bound by residues cysteine 233, cysteine 236, cysteine 252, and cysteine 255. Residues 233–255 (CENCYGLNYKKFFRLKLHICEQC) form a C4-type zinc finger.

This sequence belongs to the AccD/PCCB family. In terms of assembly, acetyl-CoA carboxylase is a heterohexamer composed of biotin carboxyl carrier protein, biotin carboxylase and 2 subunits each of ACCase subunit alpha and ACCase plastid-coded subunit beta (accD). The cofactor is Zn(2+).

It localises to the plastid. The protein localises to the chloroplast stroma. It carries out the reaction N(6)-carboxybiotinyl-L-lysyl-[protein] + acetyl-CoA = N(6)-biotinyl-L-lysyl-[protein] + malonyl-CoA. Its pathway is lipid metabolism; malonyl-CoA biosynthesis; malonyl-CoA from acetyl-CoA: step 1/1. In terms of biological role, component of the acetyl coenzyme A carboxylase (ACC) complex. Biotin carboxylase (BC) catalyzes the carboxylation of biotin on its carrier protein (BCCP) and then the CO(2) group is transferred by the transcarboxylase to acetyl-CoA to form malonyl-CoA. In Ranunculus macranthus (Large buttercup), this protein is Acetyl-coenzyme A carboxylase carboxyl transferase subunit beta, chloroplastic.